Consider the following 159-residue polypeptide: Putative pre-16S rRNA nuclease (159 aa).

It belongs to the YqgF nuclease family.

Its subcellular location is the cytoplasm. In terms of biological role, could be a nuclease involved in processing of the 5'-end of pre-16S rRNA. The chain is Putative pre-16S rRNA nuclease from Thermobifida fusca (strain YX).